The sequence spans 160 residues: uncharacterized protein (160 aa).

Positions Leu7–Asp151 constitute an N-acetyltransferase domain.

This is an uncharacterized protein from Bacillus velezensis (strain DSM 23117 / BGSC 10A6 / LMG 26770 / FZB42) (Bacillus amyloliquefaciens subsp. plantarum).